The sequence spans 507 residues: MEEHQVYLELDRSRQQDFLYPLVFREYIYGLAYGHDLNRSIFAENVGYDNKSSLLIVKRLITRMYQQNHLIISANDSKKNTFLRYNNNIYSQIISEGFAVVVEIPFSLQLSSSLEEAEILKSYNNLQSIHSIFPFFEDKFTYLNYLSDIRIPYPIHLEILVQILRYWVKDVPFFHLLRLFLYDYCNSNSLITPKKWISTFSKSNPRFFFFLYNFYVCEYESIFYFLRNKSSHLRLKSFSVFFERIFFYAKRKHLVEVVAKDFLSTLTFFKDPFIHYVRYQGKSILASKNAPLLMNKWKYYFIHLWQCHFDLWAQPGTIHINLLSEHSFHFLGYFLNVRLNRSVVRSQMLQNAFLIEMVIKKLDIIVPIIPLIRSLAKANFCNGLGNPISKPVWADSSDFDIIDRFLRICRNLSHYYNGSSKKKSLYRIKYILRLSCIKTLACKHKSTVRAFLKRLGSEKLLEEFFIEEQEIVSLIFPRASXTLQRLHRNRIWYLDILFFSNDLVNHE.

Belongs to the intron maturase 2 family. MatK subfamily.

The protein localises to the plastid. It is found in the chloroplast. In terms of biological role, usually encoded in the trnK tRNA gene intron. Probably assists in splicing its own and other chloroplast group II introns. The chain is Maturase K from Robinia pseudoacacia (Black locust).